Reading from the N-terminus, the 252-residue chain is C-X-C motif chemokine 16 (252 aa).

The signal sequence occupies residues 1-25 (MMLGRTSRLLLVLLFIAYATTSGNG). At 26–198 (NEGSKVGSCP…RGPQAGTSAT (173 aa)) the chain is on the extracellular side. Intrachain disulfides connect cysteine 34–cysteine 64 and cysteine 36–cysteine 78. Disordered regions lie at residues 115–145 (LPEP…QQPT) and 163–195 (TTTY…QAGT). A compositionally biased stretch (polar residues) spans 125-145 (DTATTSQTYLPSTLQRTQQPT). Residues 176-189 (PEAKENQKQLKENR) show a composition bias toward basic and acidic residues. The helical transmembrane segment at 199–219 (VPVLSLLAIVFILAGVLLYVV) threads the bilayer. At 220–252 (CKRRKNQLLQHPPDLAASLYTCSRRTRAENGTL) the chain is on the cytoplasmic side.

Belongs to the intercrine alpha (chemokine CxC) family. In terms of processing, glycosylated.

It is found in the membrane. In terms of biological role, induces a strong chemotactic response. Induces calcium mobilization. Binds to CXCR6/Bonzo. Also acts as a scavenger receptor on macrophages, which specifically binds to OxLDL (oxidized low density lipoprotein), suggesting that it may be involved in pathophysiology such as atherogenesis. This is C-X-C motif chemokine 16 (CXCL16) from Bos taurus (Bovine).